A 505-amino-acid polypeptide reads, in one-letter code: Probable inorganic carbon transporter subunit DabB (505 aa).

13 consecutive transmembrane segments (helical) span residues 9 to 29 (SLLTLFFIMLMASGISGLLFL), 37 to 57 (FVRIHIGILALPLLVSLLILA), 68 to 88 (WHLDSLACLMTFFVLAIGFII), 105 to 123 (YFTLFTFTTGAASMTWLSG), 162 to 182 (LFLLSWFSLFFAMMWLFHATG), 204 to 224 (TGIQLLIVLAVIIPAAQWPFQ), 231 to 251 (IVAPTPVSAIMHAGLVNAGGI), 259 to 279 (LFHGGIASIILLLLASISVLI), 303 to 323 (GFMLIQCALGAYIAAIIHLIL), 355 to 375 (LWVMAGRILSLVIGVAFWLTA), 382 to 402 (LISALILGWSLSVSWDQLVAF), 410 to 430 (IAGLTVLGGAALVYFIIHHLF), and 446 to 466 (MSAVMIVVCLLLFGSALGTWV).

The protein belongs to the inorganic carbon transporter (TC 9.A.2) DabB family. Forms a complex with DabA.

The protein localises to the cell membrane. Part of an energy-coupled inorganic carbon pump. In Bacillus subtilis (strain 168), this protein is Probable inorganic carbon transporter subunit DabB.